Here is a 370-residue protein sequence, read N- to C-terminus: 3-dehydroquinate synthase (370 aa).

NAD(+) contacts are provided by residues 107–111 (GVIGD), 131–132 (TS), lysine 144, and lysine 153. Residues glutamate 186, histidine 249, and histidine 267 each coordinate Zn(2+).

The protein belongs to the sugar phosphate cyclases superfamily. Dehydroquinate synthase family. Requires Co(2+) as cofactor. The cofactor is Zn(2+). NAD(+) is required as a cofactor.

It localises to the cytoplasm. The catalysed reaction is 7-phospho-2-dehydro-3-deoxy-D-arabino-heptonate = 3-dehydroquinate + phosphate. Its pathway is metabolic intermediate biosynthesis; chorismate biosynthesis; chorismate from D-erythrose 4-phosphate and phosphoenolpyruvate: step 2/7. Its function is as follows. Catalyzes the conversion of 3-deoxy-D-arabino-heptulosonate 7-phosphate (DAHP) to dehydroquinate (DHQ). This Jannaschia sp. (strain CCS1) protein is 3-dehydroquinate synthase.